The sequence spans 595 residues: CDPK-related kinase 3 (595 aa).

The tract at residues 1-131 is disordered; that stretch reads MGQCYGKVNQ…GTEPEQSLDK (131 aa). A lipid anchor (N-myristoyl glycine) is attached at G2. The span at 20–37 shows a compositional bias: polar residues; that stretch reads NTTTYVVSGDGNQIQPLT. The segment covering 111 to 124 has biased composition (basic and acidic residues); the sequence is KPKEGPIPEERGTE. Residues 143–405 form the Protein kinase domain; the sequence is YELGKEVGRG…AVQALTHPWL (263 aa). Residues 149–157 and K175 each bind ATP; that span reads VGRGHFGHT. The Proton acceptor role is filled by D271. At S311 the chain carries Phosphoserine. The residue at position 353 (S353) is a Phosphoserine; by CPK1 and CPK34. Residues 409–439 are autoinhibitory domain; it reads SRVIPLDILIYKLVKAYLHATPLRRAALKAL. The calmodulin binding (CaMBD) stretch occupies residues 428-448; that stretch reads ATPLRRAALKALAKALTENEL. 4 EF-hand domains span residues 446–482, 483–518, 519–558, and 559–588; these read NELVYLRAQFMLLGPNKDGSVSLENFKTALMQNATDA, MRESRVPEILHTMESLAYRKMYFEEFCAAAISIHQL, EAVDAWEEIATAGFQHFETEGNRVITIEELARELNVGASA, and YGHLRDWVRSSDGKLSYLGFTKFLHGVTLR. N461, D463, S465, K502, E507, N540, E547, S568, D570, and K572 together coordinate Ca(2+). Phosphoserine is present on S574.

Belongs to the protein kinase superfamily. Ser/Thr protein kinase family. CDPK subfamily. Binds calmodulin (CaM) in a calcium-dependent manner. Interacts with GLN1-1. Autophosphorylated. In terms of tissue distribution, ubiquitously expressed with higher levels in siliques and roots, especially at the root cap. Particularly present in vascular bundles of stems and leaves.

Its subcellular location is the cytoplasm. It is found in the membrane. The catalysed reaction is L-seryl-[protein] + ATP = O-phospho-L-seryl-[protein] + ADP + H(+). The enzyme catalyses L-threonyl-[protein] + ATP = O-phospho-L-threonyl-[protein] + ADP + H(+). With respect to regulation, not activated by calcium. Autophosphorylation may play an important role in the regulation of the kinase activity. Stimulated by magnesium ions (optimum at 10-15 mM) and manganese ions. Its function is as follows. May play a role in signal transduction pathways that involve calcium as a second messenger. Serine/threonine kinase that phosphorylates histone H3 an GLN1-1. This chain is CDPK-related kinase 3 (CRK3), found in Arabidopsis thaliana (Mouse-ear cress).